A 150-amino-acid polypeptide reads, in one-letter code: Large ribosomal subunit protein bL9 (150 aa).

Belongs to the bacterial ribosomal protein bL9 family.

In terms of biological role, binds to the 23S rRNA. This chain is Large ribosomal subunit protein bL9, found in Hydrogenovibrio crunogenus (strain DSM 25203 / XCL-2) (Thiomicrospira crunogena).